The sequence spans 202 residues: Pyridoxal 5'-phosphate synthase subunit PdxT (202 aa).

An L-glutamine-binding site is contributed by 52–54 (GES). Cys84 serves as the catalytic Nucleophile. L-glutamine contacts are provided by residues Arg120 and 148 to 149 (IR). Residues His185 and Glu187 each act as charge relay system in the active site.

The protein belongs to the glutaminase PdxT/SNO family. In the presence of PdxS, forms a dodecamer of heterodimers. Only shows activity in the heterodimer.

It carries out the reaction aldehydo-D-ribose 5-phosphate + D-glyceraldehyde 3-phosphate + L-glutamine = pyridoxal 5'-phosphate + L-glutamate + phosphate + 3 H2O + H(+). The catalysed reaction is L-glutamine + H2O = L-glutamate + NH4(+). The protein operates within cofactor biosynthesis; pyridoxal 5'-phosphate biosynthesis. Its function is as follows. Catalyzes the hydrolysis of glutamine to glutamate and ammonia as part of the biosynthesis of pyridoxal 5'-phosphate. The resulting ammonia molecule is channeled to the active site of PdxS. The chain is Pyridoxal 5'-phosphate synthase subunit PdxT from Methanopyrus kandleri (strain AV19 / DSM 6324 / JCM 9639 / NBRC 100938).